Here is a 276-residue protein sequence, read N- to C-terminus: Glucosamine-6-phosphate deaminase 2 (276 aa).

The active-site Proton acceptor; for enolization step is D72. Residues 103 to 131 (NAHILDGNAADLQAECDAFEEKIKEAGGI) adopt a coiled-coil conformation. D141 acts as the For ring-opening step in catalysis. H143 functions as the Proton acceptor; for ring-opening step in the catalytic mechanism. The active-site For ring-opening step is E148. The residue at position 161 (T161) is a Phosphothreonine.

Belongs to the glucosamine/galactosamine-6-phosphate isomerase family. In terms of assembly, homohexamer.

The protein resides in the cytoplasm. It carries out the reaction alpha-D-glucosamine 6-phosphate + H2O = beta-D-fructose 6-phosphate + NH4(+). It functions in the pathway nucleotide-sugar biosynthesis; UDP-N-acetyl-alpha-D-glucosamine biosynthesis; alpha-D-glucosamine 6-phosphate from D-fructose 6-phosphate: step 1/1. Allosterically activated by N-acetylglucosamine-6-phosphate (GlcNAc6P). Catalyzes the reversible conversion of alpha-D-glucosamine 6-phosphate (GlcN-6P) into beta-D-fructose 6-phosphate (Fru-6P) and ammonium ion, a regulatory reaction step in de novo uridine diphosphate-N-acetyl-alpha-D-glucosamine (UDP-GlcNAc) biosynthesis via hexosamine pathway. Deamination is coupled to aldo-keto isomerization mediating the metabolic flux from UDP-GlcNAc toward Fru-6P. At high ammonium level can drive amination and isomerization of Fru-6P toward hexosamines and UDP-GlcNAc synthesis. Has a role in fine tuning the metabolic fluctuations of cytosolic UDP-GlcNAc and their effects on hyaluronan synthesis that occur during tissue remodeling. The chain is Glucosamine-6-phosphate deaminase 2 from Mus musculus (Mouse).